Reading from the N-terminus, the 311-residue chain is Ceroid-lipofuscinosis neuronal protein 6 (311 aa).

Helical transmembrane passes span 56 to 76, 81 to 101, 111 to 131, 179 to 199, 204 to 224, 225 to 245, and 260 to 280; these read WVLDFGRPIAMLVFPLEWFPL, VGDYFHMAYNVITPFLLLKLI, SITYVSIIIFIMGASIHLVGD, CMWYIPFFLILFMYFSGCFTA, SLIPGPALLLVAPSGLYYWYL, VTEGQIFILFIFTFFAMLALV, and LFLFSSFALTLLLVALWVAWL.

As to quaternary structure, interacts with CRMP2. Interacts with CLN5. Interacts with CLN3.

It is found in the endoplasmic reticulum membrane. The protein localises to the endoplasmic reticulum. The chain is Ceroid-lipofuscinosis neuronal protein 6 (CLN6) from Homo sapiens (Human).